A 519-amino-acid polypeptide reads, in one-letter code: ATP synthase subunit beta, mitochondrial (519 aa).

Position 195-202 (195-202 (GGAGVGKT)) interacts with ATP.

Belongs to the ATPase alpha/beta chains family. As to quaternary structure, F-type ATPases have 2 components, CF(1) - the catalytic core - and CF(0) - the membrane proton channel. CF(1) has five subunits: alpha(3), beta(3), gamma(1), delta(1), epsilon(1). CF(0) has three main subunits: a, b and c.

The protein localises to the mitochondrion. It is found in the mitochondrion inner membrane. It catalyses the reaction ATP + H2O + 4 H(+)(in) = ADP + phosphate + 5 H(+)(out). Functionally, mitochondrial membrane ATP synthase (F(1)F(0) ATP synthase or Complex V) produces ATP from ADP in the presence of a proton gradient across the membrane which is generated by electron transport complexes of the respiratory chain. F-type ATPases consist of two structural domains, F(1) - containing the extramembraneous catalytic core, and F(0) - containing the membrane proton channel, linked together by a central stalk and a peripheral stalk. During catalysis, ATP synthesis in the catalytic domain of F(1) is coupled via a rotary mechanism of the central stalk subunits to proton translocation. Subunits alpha and beta form the catalytic core in F(1). Rotation of the central stalk against the surrounding alpha(3)beta(3) subunits leads to hydrolysis of ATP in three separate catalytic sites on the beta subunits. The protein is ATP synthase subunit beta, mitochondrial (atp-2) of Neurospora crassa (strain ATCC 24698 / 74-OR23-1A / CBS 708.71 / DSM 1257 / FGSC 987).